Consider the following 119-residue polypeptide: uncharacterized protein (119 aa).

The segment at 1 to 20 (MPHLAAEAHTWPPHISHSTL) is disordered. The chain crosses the membrane as a helical span at residues 74-94 (LLFVVHQGHIGTGLIVFIICW).

It localises to the membrane. This is an uncharacterized protein from Saccharomyces cerevisiae (strain ATCC 204508 / S288c) (Baker's yeast).